A 140-amino-acid polypeptide reads, in one-letter code: Phosphoribosyl-AMP cyclohydrolase (140 aa).

Residue Asp84 participates in Mg(2+) binding. Position 85 (Cys85) interacts with Zn(2+). 2 residues coordinate Mg(2+): Asp86 and Asp88. Positions 101 and 108 each coordinate Zn(2+).

This sequence belongs to the PRA-CH family. In terms of assembly, homodimer. Mg(2+) is required as a cofactor. Zn(2+) serves as cofactor.

It localises to the cytoplasm. The catalysed reaction is 1-(5-phospho-beta-D-ribosyl)-5'-AMP + H2O = 1-(5-phospho-beta-D-ribosyl)-5-[(5-phospho-beta-D-ribosylamino)methylideneamino]imidazole-4-carboxamide. It participates in amino-acid biosynthesis; L-histidine biosynthesis; L-histidine from 5-phospho-alpha-D-ribose 1-diphosphate: step 3/9. In terms of biological role, catalyzes the hydrolysis of the adenine ring of phosphoribosyl-AMP. The polypeptide is Phosphoribosyl-AMP cyclohydrolase (Chloroherpeton thalassium (strain ATCC 35110 / GB-78)).